The sequence spans 173 residues: Pathogenesis-related protein 1A/1B (173 aa).

The first 20 residues, 1–20 (MSTSAVLFLLLAVFAAGASA), serve as a signal peptide directing secretion.

It belongs to the thaumatin family.

The sequence is that of Pathogenesis-related protein 1A/1B from Hordeum vulgare (Barley).